Consider the following 267-residue polypeptide: Outer membrane protein assembly factor BamD (267 aa).

Residues 1–16 (MKKILLTVSLGLALSA) form the signal peptide. C17 carries N-palmitoyl cysteine lipidation. The S-diacylglycerol cysteine moiety is linked to residue C17.

The protein belongs to the BamD family. In terms of assembly, part of the Bam complex.

It is found in the cell outer membrane. Its function is as follows. Part of the outer membrane protein assembly complex, which is involved in assembly and insertion of beta-barrel proteins into the outer membrane. Required for efficient transformation of Neisseria gonorrhoeae by species-related DNA. The protein is Outer membrane protein assembly factor BamD of Neisseria gonorrhoeae.